The chain runs to 236 residues: Small ribosomal subunit protein uS2c (236 aa).

This sequence belongs to the universal ribosomal protein uS2 family.

The protein resides in the plastid. Its subcellular location is the chloroplast. The sequence is that of Small ribosomal subunit protein uS2c (rps2) from Physcomitrium patens (Spreading-leaved earth moss).